Consider the following 119-residue polypeptide: Large ribosomal subunit protein bL19 (119 aa).

Belongs to the bacterial ribosomal protein bL19 family.

Its function is as follows. This protein is located at the 30S-50S ribosomal subunit interface and may play a role in the structure and function of the aminoacyl-tRNA binding site. This Arthrobacter sp. (strain FB24) protein is Large ribosomal subunit protein bL19.